Here is a 271-residue protein sequence, read N- to C-terminus: Mannosyl-3-phosphoglycerate phosphatase (271 aa).

The active-site Nucleophile is the D13. The Mg(2+) site is built by D13, D15, and D214.

Belongs to the HAD-like hydrolase superfamily. MPGP family. Requires Mg(2+) as cofactor.

It is found in the cytoplasm. The catalysed reaction is 2-O-(alpha-D-mannosyl)-3-phosphoglycerate + H2O = (2R)-2-O-(alpha-D-mannosyl)-glycerate + phosphate. The sequence is that of Mannosyl-3-phosphoglycerate phosphatase from Escherichia coli O81 (strain ED1a).